Reading from the N-terminus, the 79-residue chain is Acyl carrier protein (79 aa).

The Carrier domain maps to 2-77 (ESIEQRVKKI…QAIDYINSHG (76 aa)). Residue S37 is modified to O-(pantetheine 4'-phosphoryl)serine.

The protein belongs to the acyl carrier protein (ACP) family. Post-translationally, 4'-phosphopantetheine is transferred from CoA to a specific serine of apo-ACP by AcpS. This modification is essential for activity because fatty acids are bound in thioester linkage to the sulfhydryl of the prosthetic group.

The protein resides in the cytoplasm. It participates in lipid metabolism; fatty acid biosynthesis. Its function is as follows. Carrier of the growing fatty acid chain in fatty acid biosynthesis. The chain is Acyl carrier protein from Bordetella avium (strain 197N).